A 474-amino-acid chain; its full sequence is Poly(A) polymerase catalytic subunit (474 aa).

Residues Asp-193 and Asp-195 contribute to the active site.

The protein belongs to the poxviridae poly(A) polymerase catalytic subunit family. As to quaternary structure, heterodimer of a large (catalytic) subunit and a small (regulatory) subunit.

The catalysed reaction is RNA(n) + ATP = RNA(n)-3'-adenine ribonucleotide + diphosphate. Functionally, polymerase that creates the 3'-poly(A) tail of mRNA's. This is Poly(A) polymerase catalytic subunit (PAPL) from Bos taurus (Bovine).